We begin with the raw amino-acid sequence, 50 residues long: Sperm protamine P1 (50 aa).

Disulfide bonds link Cys7/Cys15 and Cys39/Cys47.

Belongs to the protamine P1 family. In terms of assembly, cross-linked by interchain disulfide bonds around the DNA-helix. As to expression, testis.

Its subcellular location is the nucleus. The protein localises to the chromosome. Protamines substitute for histones in the chromatin of sperm during the haploid phase of spermatogenesis. They compact sperm DNA into a highly condensed, stable and inactive complex. The polypeptide is Sperm protamine P1 (PRM1) (Oryctolagus cuniculus (Rabbit)).